A 2778-amino-acid polypeptide reads, in one-letter code: Probable ubiquitin carboxyl-terminal hydrolase FAF (2778 aa).

Residues 1–85 (MTFDTRRHTT…SQSSDDVAAS (85 aa)) are disordered. Over residues 10-39 (TGQPGSTAPSSSSSTTSTTTTTTSPAQSAG) the composition is skewed to low complexity. Residues 71 to 85 (QPATDSQSSDDVAAS) are compositionally biased toward polar residues. Residue Ser-924 is modified to Phosphoserine. Residues 1065-1094 (GTGLASSPDSSSDSSTGSPPRPCPDMQRVE) form a disordered region. The segment covering 1070–1082 (SSPDSSSDSSTGS) has biased composition (low complexity). A USP domain is found at 1668–2062 (CGLKNAGATC…NAYMLFYTRC (395 aa)). Residue Cys-1677 is the Nucleophile of the active site. Catalysis depends on His-1986, which acts as the Proton acceptor. Disordered regions lie at residues 2568–2632 (VSEK…GDSN) and 2644–2691 (AYTS…INGL). 2 stretches are compositionally biased toward low complexity: residues 2614-2627 (TPTTSSPSTAAWPA) and 2644-2671 (AYTSTGSGSTSGGSAPTSALTTTAGSGA). The segment covering 2672–2691 (NSETESSAQETTGETTINGL) has biased composition (polar residues).

It belongs to the peptidase C19 family. In terms of assembly, interacts with imd. In terms of processing, ubiquitinated. Ubiquitination is enhanced by the expression of imd. As to expression, eye disks and ovaries. Expressed in larval fat body.

The enzyme catalyses Thiol-dependent hydrolysis of ester, thioester, amide, peptide and isopeptide bonds formed by the C-terminal Gly of ubiquitin (a 76-residue protein attached to proteins as an intracellular targeting signal).. Functionally, ubiquitin C-terminal hydrolase involved in development and the imd/NF-kappa-B (IMD) signaling cascade. Required for eye and embryo development, and plays a role in compound eye assembly and oogenesis respectively. In the larval eye disks, cells outside the assembling facets require this protein for short-range cell interactions that prevent the mystery cells from becoming photoreceptors. Also required for nuclear migration and cellularization in early embryogenesis and could play a role in pole cell determination, development or function. Regulates the IMD signaling cascade at later stages of infection (around 6 hours post-infection) by inhibiting the expression of the antimicrobial peptides Dpt and Dro. Acts by modulating the state of imd polyubiquitination and/or stability; a function which appears to be independent of its enzymatic activity. In turn, imd enhances the polyubiquitination and stability of faf suggesting that they may form a regulatory feedback mechanism within the Imd pathway. The polypeptide is Probable ubiquitin carboxyl-terminal hydrolase FAF (faf) (Drosophila melanogaster (Fruit fly)).